The primary structure comprises 158 residues: NAD(P)H-quinone oxidoreductase subunit N (158 aa).

This sequence belongs to the complex I NdhN subunit family. NDH-1 can be composed of about 15 different subunits; different subcomplexes with different compositions have been identified which probably have different functions.

It localises to the cellular thylakoid membrane. It catalyses the reaction a plastoquinone + NADH + (n+1) H(+)(in) = a plastoquinol + NAD(+) + n H(+)(out). The enzyme catalyses a plastoquinone + NADPH + (n+1) H(+)(in) = a plastoquinol + NADP(+) + n H(+)(out). NDH-1 shuttles electrons from an unknown electron donor, via FMN and iron-sulfur (Fe-S) centers, to quinones in the respiratory and/or the photosynthetic chain. The immediate electron acceptor for the enzyme in this species is believed to be plastoquinone. Couples the redox reaction to proton translocation, and thus conserves the redox energy in a proton gradient. Cyanobacterial NDH-1 also plays a role in inorganic carbon-concentration. In Crocosphaera subtropica (strain ATCC 51142 / BH68) (Cyanothece sp. (strain ATCC 51142)), this protein is NAD(P)H-quinone oxidoreductase subunit N.